The primary structure comprises 90 residues: Progonadoliberin-3 (90 aa).

A signal peptide spans 1 to 23; it reads MEASSRVTVQVLLLALVVQVTLS. Residue Gln24 is modified to Pyrrolidone carboxylic acid. Gly33 carries the post-translational modification Glycine amide.

The protein belongs to the GnRH family.

The protein localises to the secreted. Stimulates the secretion of gonadotropins. This is Progonadoliberin-3 (gnrh3) from Sparus aurata (Gilthead sea bream).